Consider the following 126-residue polypeptide: Fluoride-specific ion channel FluC (126 aa).

4 consecutive transmembrane segments (helical) span residues 7–27 (LWLALGGAVGAVCRQAAVLLL), 36–56 (FPAAVLLINVLGSFLLGLTLA), 74–94 (GVLGAFTTFSTFSTELDGLLL), and 98–118 (GGLALAYAALSVGLGLTAAVA). Glycine 77 and threonine 80 together coordinate Na(+).

Belongs to the fluoride channel Fluc/FEX (TC 1.A.43) family.

Its subcellular location is the cell membrane. The catalysed reaction is fluoride(in) = fluoride(out). Na(+) is not transported, but it plays an essential structural role and its presence is essential for fluoride channel function. Its function is as follows. Fluoride-specific ion channel. Important for reducing fluoride concentration in the cell, thus reducing its toxicity. The chain is Fluoride-specific ion channel FluC from Deinococcus radiodurans (strain ATCC 13939 / DSM 20539 / JCM 16871 / CCUG 27074 / LMG 4051 / NBRC 15346 / NCIMB 9279 / VKM B-1422 / R1).